A 122-amino-acid polypeptide reads, in one-letter code: Large ribosomal subunit protein uL14 (122 aa).

Belongs to the universal ribosomal protein uL14 family. Part of the 50S ribosomal subunit. Forms a cluster with proteins L3 and L19. In the 70S ribosome, L14 and L19 interact and together make contacts with the 16S rRNA in bridges B5 and B8.

In terms of biological role, binds to 23S rRNA. Forms part of two intersubunit bridges in the 70S ribosome. The chain is Large ribosomal subunit protein uL14 from Shewanella frigidimarina (strain NCIMB 400).